The sequence spans 416 residues: MFKFGDEKGQLKCSFCGKSQEQVRKLVAGPGVYICDECIELCNEIIEEELNDDVEFNLNNIPKPREIKKILDQYVVGQERAKKSLSVAVYNHYKRVNSDMKIDDVELQKSNILMVGPTGCGKTLLAQTLARILDVPFAITDATSLTEAGYVGEDVENILLKLIQAADYDIEKAERGIIYIDEIDKIARKSENPSITRDVSGEGVQQALLKILEGTVASVPPQGGRKHPHQEFIQIDTTNILFIAGGAFDGLDKIIKSRIDNKVMGFGADIKSKTEENVGETLKYILPEDLLRYGLIPEFIGRLPVIVTLNELVEEDLVKILTEPRNALVKQYKKFFEMDNVELEFTPEALTAIAQKALERNTGARGLRAVVEEAILDIMYDLPSEPGIAKCVITPEVIKNHKNPELIRVKDKEETA.

The 54-residue stretch at 1–54 folds into the ClpX-type ZB domain; it reads MFKFGDEKGQLKCSFCGKSQEQVRKLVAGPGVYICDECIELCNEIIEEELNDDV. Residues C13, C16, C35, and C38 each coordinate Zn(2+). 117-124 is an ATP binding site; sequence PTGCGKTL.

The protein belongs to the ClpX chaperone family. As to quaternary structure, component of the ClpX-ClpP complex. Forms a hexameric ring that, in the presence of ATP, binds to fourteen ClpP subunits assembled into a disk-like structure with a central cavity, resembling the structure of eukaryotic proteasomes.

Functionally, ATP-dependent specificity component of the Clp protease. It directs the protease to specific substrates. Can perform chaperone functions in the absence of ClpP. The sequence is that of ATP-dependent Clp protease ATP-binding subunit ClpX from Halothermothrix orenii (strain H 168 / OCM 544 / DSM 9562).